The primary structure comprises 120 residues: Large ribosomal subunit protein bL12 (120 aa).

This sequence belongs to the bacterial ribosomal protein bL12 family. As to quaternary structure, homodimer. Part of the ribosomal stalk of the 50S ribosomal subunit. Forms a multimeric L10(L12)X complex, where L10 forms an elongated spine to which 2 to 4 L12 dimers bind in a sequential fashion. Binds GTP-bound translation factors.

Forms part of the ribosomal stalk which helps the ribosome interact with GTP-bound translation factors. Is thus essential for accurate translation. The chain is Large ribosomal subunit protein bL12 from Pseudoalteromonas translucida (strain TAC 125).